Here is a 347-residue protein sequence, read N- to C-terminus: Heme A synthase (347 aa).

8 consecutive transmembrane segments (helical) span residues 14–34, 95–115, 125–145, 166–186, 198–218, 260–280, 289–309, and 311–331; these read VKVWLCICSIGILLMVLVGGI, YFHRLLGRIVGLIFLLPFLYF, LIVNFIIICVLILFQGVMGWL, LLLALLIFYLLWRQFLSAVIL, LIFYVISILIVIQITFGSLVA, FIHEVIAVLILVIVSATLLIL, LLLVCLLIQLTFGILTFIYNV, and IALASLHQVTAFILFAINTYL. His-262 is a binding site for heme. A heme-binding site is contributed by His-317.

This sequence belongs to the COX15/CtaA family. Type 2 subfamily. As to quaternary structure, interacts with CtaB. The cofactor is heme b.

The protein resides in the cell membrane. It catalyses the reaction Fe(II)-heme o + 2 A + H2O = Fe(II)-heme a + 2 AH2. It participates in porphyrin-containing compound metabolism; heme A biosynthesis; heme A from heme O: step 1/1. Catalyzes the conversion of heme O to heme A by two successive hydroxylations of the methyl group at C8. The first hydroxylation forms heme I, the second hydroxylation results in an unstable dihydroxymethyl group, which spontaneously dehydrates, resulting in the formyl group of heme A. This Ehrlichia canis (strain Jake) protein is Heme A synthase.